Here is a 114-residue protein sequence, read N- to C-terminus: T cell receptor beta variable 9 (114 aa).

The first 21 residues, 1–21 (MGFRLLCCVAFCLLGAGPVDS), serve as a signal peptide directing secretion. Residues 22-114 (GVTQTPKHLI…SALYFCASSV (93 aa)) enclose the Ig-like domain. Cysteines 42 and 110 form a disulfide. N-linked (GlcNAc...) asparagine glycosylation is present at Asn96.

As to quaternary structure, alpha-beta TR is a heterodimer composed of an alpha and beta chain; disulfide-linked. The alpha-beta TR is associated with the transmembrane signaling CD3 coreceptor proteins to form the TR-CD3 (TcR or TCR). The assembly of alpha-beta TR heterodimers with CD3 occurs in the endoplasmic reticulum where a single alpha-beta TR heterodimer associates with one CD3D-CD3E heterodimer, one CD3G-CD3E heterodimer and one CD247 homodimer forming a stable octameric structure. CD3D-CD3E and CD3G-CD3E heterodimers preferentially associate with TR alpha and TR beta chains, respectively. The association of the CD247 homodimer is the last step of TcR assembly in the endoplasmic reticulum and is required for transport to the cell surface.

Its subcellular location is the cell membrane. Its function is as follows. V region of the variable domain of T cell receptor (TR) beta chain that participates in the antigen recognition. Alpha-beta T cell receptors are antigen specific receptors which are essential to the immune response and are present on the cell surface of T lymphocytes. Recognize peptide-major histocompatibility (MH) (pMH) complexes that are displayed by antigen presenting cells (APC), a prerequisite for efficient T cell adaptive immunity against pathogens. Binding of alpha-beta TR to pMH complex initiates TR-CD3 clustering on the cell surface and intracellular activation of LCK that phosphorylates the ITAM motifs of CD3G, CD3D, CD3E and CD247 enabling the recruitment of ZAP70. In turn ZAP70 phosphorylates LAT, which recruits numerous signaling molecules to form the LAT signalosome. The LAT signalosome propagates signal branching to three major signaling pathways, the calcium, the mitogen-activated protein kinase (MAPK) kinase and the nuclear factor NF-kappa-B (NF-kB) pathways, leading to the mobilization of transcription factors that are critical for gene expression and essential for T cell growth and differentiation. The T cell repertoire is generated in the thymus, by V-(D)-J rearrangement. This repertoire is then shaped by intrathymic selection events to generate a peripheral T cell pool of self-MH restricted, non-autoaggressive T cells. Post-thymic interaction of alpha-beta TR with the pMH complexes shapes TR structural and functional avidity. The sequence is that of T cell receptor beta variable 9 from Homo sapiens (Human).